A 396-amino-acid chain; its full sequence is Decapping nuclease RAI1 (396 aa).

107-109 (YRG) is a binding site for substrate. Glutamate 179 contributes to the a divalent metal cation binding site. Glutamate 228 serves as a coordination point for substrate. Residues aspartate 230, glutamate 249, and leucine 250 each coordinate a divalent metal cation. Residues lysine 251 and glutamine 275 each contribute to the substrate site.

It belongs to the DXO/Dom3Z family. As to quaternary structure, interacts with RAT1; the interaction is direct, stabilizes RAT1 protein structure and stimulates its exoribonuclease activity. The interaction also stimulates RAI1 pyrophosphohydrolase activity, probably by recruiting it to mRNA substrates. The cofactor is a divalent metal cation.

It is found in the nucleus. The catalysed reaction is a 5'-end NAD(+)-phospho-ribonucleoside in mRNA + H2O = a 5'-end phospho-ribonucleoside in mRNA + NAD(+) + H(+). It catalyses the reaction a 5'-end (N(7)-methyl 5'-triphosphoguanosine)-ribonucleoside-ribonucleotide in mRNA + H2O = a (N(7)-methyl 5'-triphosphoguanosine)-nucleoside + a 5'-end phospho-ribonucleoside in mRNA + H(+). The enzyme catalyses a 5'-end triphospho-ribonucleoside in mRNA + H2O = a 5'-end phospho-ribonucleoside in mRNA + diphosphate + H(+). Its function is as follows. Decapping enzyme for NAD-capped RNAs: specifically hydrolyzes the nicotinamide adenine dinucleotide (NAD) cap from a subset of RNAs by removing the entire NAD moiety from the 5'-end of an NAD-capped RNA. The NAD-cap is present at the 5'-end of some RNAs and snoRNAs. In contrast to the canonical 5'-end N7 methylguanosine (m7G) cap, the NAD cap promotes mRNA decay. Also acts as a non-canonical decapping enzyme that removes the entire cap structure of m7G capped or incompletely capped RNAs. Has decapping activity toward incomplete 5'-end m7G cap mRNAs such as unmethylated 5'-end-capped RNA (cap0), while it has no activity toward 2'-O-ribose methylated m7G cap (cap1). Also possesses RNA 5'-pyrophosphohydrolase activity by hydrolyzing the 5'-end triphosphate to release pyrophosphates. Stimulates exoribonuclease activity of Rat1, allowing it to degrade RNAs with stable secondary structure more effectively. This chain is Decapping nuclease RAI1, found in Scheffersomyces stipitis (strain ATCC 58785 / CBS 6054 / NBRC 10063 / NRRL Y-11545) (Yeast).